We begin with the raw amino-acid sequence, 245 residues long: Geranylgeranylglyceryl phosphate synthase (245 aa).

The Mg(2+) site is built by D24 and S54. Sn-glycerol 1-phosphate is bound by residues 172–178, 203–204, and 225–226; these read YLEAGSG, GG, and GT.

This sequence belongs to the GGGP/HepGP synthase family. Group II subfamily. It depends on Mg(2+) as a cofactor.

The protein localises to the cytoplasm. The enzyme catalyses sn-glycerol 1-phosphate + (2E,6E,10E)-geranylgeranyl diphosphate = sn-3-O-(geranylgeranyl)glycerol 1-phosphate + diphosphate. It participates in membrane lipid metabolism; glycerophospholipid metabolism. Functionally, prenyltransferase that catalyzes the transfer of the geranylgeranyl moiety of geranylgeranyl diphosphate (GGPP) to the C3 hydroxyl of sn-glycerol-1-phosphate (G1P). This reaction is the first ether-bond-formation step in the biosynthesis of archaeal membrane lipids. The sequence is that of Geranylgeranylglyceryl phosphate synthase from Staphylothermus marinus (strain ATCC 43588 / DSM 3639 / JCM 9404 / F1).